The primary structure comprises 956 residues: Glutamate receptor ionotropic, kainate 4 (956 aa).

The N-terminal stretch at 1 to 20 is a signal peptide; sequence MPRVSAPLVLLPAWLLMVAC. Topologically, residues 21–545 are extracellular; the sequence is SPHSLRIAAI…YFSFLDPFSP (525 aa). Residues asparagine 158, asparagine 220, asparagine 272, asparagine 286, asparagine 323, asparagine 408, asparagine 415, and asparagine 479 are each glycosylated (N-linked (GlcNAc...) asparagine). L-glutamate-binding residues include glycine 500, threonine 502, and arginine 507. The helical transmembrane segment at 546 to 566 threads the bilayer; sequence GVWLFMLLAYLAVSCVLFLVA. Topologically, residues 567–623 are cytoplasmic; that stretch reads RLTPYEWYSPHPCAQGRCNLLVNQYSLGNSLWFPVGGFMQQGSTIAPRALSTRCVSG. The helical transmembrane segment at 624-644 threads the bilayer; sequence VWWAFTLIIISSYTANLAAFL. Residues 645-804 lie on the Extracellular side of the membrane; the sequence is TVQRMEVPIE…HRAKGLGMEN (160 aa). Serine 674, serine 675, and glutamate 723 together coordinate L-glutamate. A glycan (N-linked (GlcNAc...) asparagine) is linked at asparagine 736. Residues 805–825 traverse the membrane as a helical segment; that stretch reads IGGIFVVLICGLIVAIFMAML. Residues 826 to 956 are Cytoplasmic-facing; the sequence is EFLWTLRHSE…DKTTNSSEPE (131 aa). Residues 931-956 are disordered; it reads LRARPSPARSEESLEWDKTTNSSEPE. Residues 939–948 show a composition bias toward basic and acidic residues; the sequence is RSEESLEWDK.

This sequence belongs to the glutamate-gated ion channel (TC 1.A.10.1) family. GRIK4 subfamily. As to quaternary structure, homodimer. Can form functional heteromeric receptors with GRIK1, GRIK2 and GRIK3 subunits. Forms a heteromeric complex with GRIK2. Expressed in the hippocampus and cerebellum (at protein level).

It is found in the cell membrane. Its subcellular location is the postsynaptic cell membrane. It localises to the presynaptic cell membrane. In terms of biological role, ionotropic glutamate receptor that functions as a cation-permeable ligand-gated ion channel. Cannot form functional channels on its own and produces channel activity only in heteromeric assembly with GRIK1, GRIK2 and GRIK3 subunits. The sequence is that of Glutamate receptor ionotropic, kainate 4 (Grik4) from Mus musculus (Mouse).